We begin with the raw amino-acid sequence, 370 residues long: MGILRFVLLISLNLVLFGFKTTVSQPQQQAQVPCLFIFGDSLVDNGNNNRLLSLARANYRPYGIDFPQGTTGRFTNGRTYVDALAQILGFRNYIPPYSRIRGQAILRGANFASGAAGIRDETGDNLGAHTSMNQQVELYTTAVQQMLRYFRGDTNELQRYLSRCIFYSGMGSNDYLNNYFMPDFYSTSTNYNDKTFAESLIKNYTQQLTRLYQFGARKVIVTGVGQIGCIPYQLARYNNRNNSTGRCNEKINNAIVVFNTQVKKLVDRLNKGQLKGAKFVYLDSYKSTYDLAVNGAAYGFEVVDKGCCGVGRNNGQITCLPLQTPCPDRTKYLFWDAFHPTETANILLAKSNFYSRAYTYPINIQELANL.

A signal peptide spans 1–24 (MGILRFVLLISLNLVLFGFKTTVS). The Nucleophile role is filled by Ser41. 3 N-linked (GlcNAc...) asparagine glycosylation sites follow: Asn203, Asn241, and Asn242. Residues Asp336 and His339 contribute to the active site.

This sequence belongs to the 'GDSL' lipolytic enzyme family.

The protein resides in the secreted. In Arabidopsis thaliana (Mouse-ear cress), this protein is GDSL esterase/lipase At1g33811.